Consider the following 129-residue polypeptide: UPF0344 protein SAR0931 (129 aa).

4 consecutive transmembrane segments (helical) span residues 1–21 (MLHL…ATYL), 36–56 (LHMV…WILI), 67–87 (MLLT…EVSI), and 99–119 (MFWI…ILPL).

The protein belongs to the UPF0344 family.

The protein localises to the cell membrane. This Staphylococcus aureus (strain MRSA252) protein is UPF0344 protein SAR0931.